A 210-amino-acid chain; its full sequence is Probable nicotinate-nucleotide adenylyltransferase (210 aa).

This sequence belongs to the NadD family.

The catalysed reaction is nicotinate beta-D-ribonucleotide + ATP + H(+) = deamido-NAD(+) + diphosphate. It participates in cofactor biosynthesis; NAD(+) biosynthesis; deamido-NAD(+) from nicotinate D-ribonucleotide: step 1/1. Functionally, catalyzes the reversible adenylation of nicotinate mononucleotide (NaMN) to nicotinic acid adenine dinucleotide (NaAD). In Streptococcus mutans serotype c (strain ATCC 700610 / UA159), this protein is Probable nicotinate-nucleotide adenylyltransferase.